An 817-amino-acid polypeptide reads, in one-letter code: LPS-assembly protein LptD (817 aa).

Residues 1–45 (MDRLPLPHALHVPTHRPFAAPLPPRRLLARLAALMLCGVPLAVLA) form the signal peptide.

This sequence belongs to the LptD family. Component of the lipopolysaccharide transport and assembly complex. Interacts with LptE and LptA.

It is found in the cell outer membrane. In terms of biological role, together with LptE, is involved in the assembly of lipopolysaccharide (LPS) at the surface of the outer membrane. This is LPS-assembly protein LptD from Acidovorax sp. (strain JS42).